Consider the following 347-residue polypeptide: MRVMIVDDSAVVRGMVTRWLEEAGFIIAAIAVDGGQALRKLADTSVDVCLLDIEMPVMSGLEALPKLLAAKPDLRVIMASTLTERGAEVTLRALDLGAADYIAKPSANKLGGADLYRKDLIEKVRHLGARAARPAPPQAAPRPTLAPPSSDPAGPIEAVVVASSTGGPPALRRFIAGLGADWTSPILIAQHMPPGFTRTLAQMLDPISHLTAREAQNGEPIVPGVIYVAPGDYHMTVRAAGGGGPSIHLDQGPEVNYCRPSADPLFESAARFWKGRVLGVVLTGMGRDGRDGAAVLAKVGGTIIAQDEATSVVWGMPGAVANAGLAEAVLPLDQIGPYIASRARSVA.

Residues 2-119 form the Response regulatory domain; sequence RVMIVDDSAV…LGGADLYRKD (118 aa). 4-aspartylphosphate is present on aspartate 52. Residues 131–153 are disordered; sequence AARPAPPQAAPRPTLAPPSSDPA. Residues 134–150 show a composition bias toward pro residues; the sequence is PAPPQAAPRPTLAPPSS. A CheB-type methylesterase domain is found at 152–346; sequence PAGPIEAVVV…PYIASRARSV (195 aa). Residues serine 164, histidine 191, and aspartate 288 contribute to the active site.

This sequence belongs to the CheB family. Phosphorylated by CheA. Phosphorylation of the N-terminal regulatory domain activates the methylesterase activity.

The protein resides in the cytoplasm. The enzyme catalyses [protein]-L-glutamate 5-O-methyl ester + H2O = L-glutamyl-[protein] + methanol + H(+). It catalyses the reaction L-glutaminyl-[protein] + H2O = L-glutamyl-[protein] + NH4(+). In terms of biological role, involved in chemotaxis. Part of a chemotaxis signal transduction system that modulates chemotaxis in response to various stimuli. Catalyzes the demethylation of specific methylglutamate residues introduced into the chemoreceptors (methyl-accepting chemotaxis proteins or MCP) by CheR. Also mediates the irreversible deamidation of specific glutamine residues to glutamic acid. The polypeptide is Protein-glutamate methylesterase/protein-glutamine glutaminase 2 (Caulobacter vibrioides (strain ATCC 19089 / CIP 103742 / CB 15) (Caulobacter crescentus)).